We begin with the raw amino-acid sequence, 174 residues long: Crossover junction endodeoxyribonuclease RuvC (174 aa).

Residues Asp8, Glu67, and Asp139 contribute to the active site. 3 residues coordinate Mg(2+): Asp8, Glu67, and Asp139.

The protein belongs to the RuvC family. Homodimer which binds Holliday junction (HJ) DNA. The HJ becomes 2-fold symmetrical on binding to RuvC with unstacked arms; it has a different conformation from HJ DNA in complex with RuvA. In the full resolvosome a probable DNA-RuvA(4)-RuvB(12)-RuvC(2) complex forms which resolves the HJ. Mg(2+) is required as a cofactor.

Its subcellular location is the cytoplasm. The catalysed reaction is Endonucleolytic cleavage at a junction such as a reciprocal single-stranded crossover between two homologous DNA duplexes (Holliday junction).. The RuvA-RuvB-RuvC complex processes Holliday junction (HJ) DNA during genetic recombination and DNA repair. Endonuclease that resolves HJ intermediates. Cleaves cruciform DNA by making single-stranded nicks across the HJ at symmetrical positions within the homologous arms, yielding a 5'-phosphate and a 3'-hydroxyl group; requires a central core of homology in the junction. The consensus cleavage sequence is 5'-(A/T)TT(C/G)-3'. Cleavage occurs on the 3'-side of the TT dinucleotide at the point of strand exchange. HJ branch migration catalyzed by RuvA-RuvB allows RuvC to scan DNA until it finds its consensus sequence, where it cleaves and resolves the cruciform DNA. This Pseudomonas entomophila (strain L48) protein is Crossover junction endodeoxyribonuclease RuvC.